The sequence spans 249 residues: Protein ZPS1 (249 aa).

The N-terminal stretch at 1-20 is a signal peptide; it reads MKFSSGKSIIFATIASLALS. 4 N-linked (GlcNAc...) asparagine glycosylation sites follow: asparagine 28, asparagine 57, asparagine 98, and asparagine 217.

Belongs to the ZPS1 family.

The polypeptide is Protein ZPS1 (ZPS1) (Saccharomyces cerevisiae (strain ATCC 204508 / S288c) (Baker's yeast)).